The chain runs to 672 residues: Transcriptional regulator Kaiso (672 aa).

The interaction with NCOR1 stretch occupies residues 1–103 (MESRKLISAT…RSDLLDELIK (103 aa)). Residues 1–136 (MESRKLISAT…SGTAQDGNTE (136 aa)) are self-association. The region spanning 32-94 (CDVTVIVEDR…IYSSKIVRVR (63 aa)) is the BTB domain. Glycyl lysine isopeptide (Lys-Gly) (interchain with G-Cter in SUMO2) cross-links involve residues lysine 151 and lysine 153. Threonine 251 carries the post-translational modification Phosphothreonine. An interaction with CBFA2T3 region spans residues 298–573 (LPNHMPSSIN…FMSSHIKSVH (276 aa)). The disordered stretch occupies residues 325–354 (KANEEEEEEIIDDDDDTISSSPDSAVSNTS). Residues 328–341 (EEEEEEIIDDDDDT) show a composition bias toward acidic residues. Residues lysine 390, lysine 407, lysine 414, lysine 449, lysine 465, lysine 474, and lysine 479 each participate in a glycyl lysine isopeptide (Lys-Gly) (interchain with G-Cter in SUMO2) cross-link. Residues 454–672 (EGEARLENEI…EFEFIIPESY (219 aa)) are interaction with CTNND1. Positions 471–480 (MANKRMKVKH) match the Nuclear localization signal motif. 3 consecutive C2H2-type zinc fingers follow at residues 494 to 516 (YICI…FNIH), 522 to 544 (YPCR…EIHH), and 550 to 573 (YQCL…KSVH). A required for DNA-binding region spans residues 514–638 (NIHSWEKKYP…TTTSTQNKPM (125 aa)). Residues lysine 539, lysine 570, lysine 582, lysine 611, and lysine 618 each participate in a glycyl lysine isopeptide (Lys-Gly) (interchain with G-Cter in SUMO2) cross-link. The tract at residues 616 to 635 (GYKVDTGKEPPVGTTTSTQN) is disordered.

In terms of assembly, self-associates. Interacts with CTNND2. Interacts with CTNND1, and this interaction inhibits binding to both methylated and non-methylated DNA. Interacts with NCOR1. Interacts with KPNA2/RCH1, which may mediate nuclear import of this protein. Interacts with CBFA2T3. As to expression, expressed in vascular endothelium.

The protein localises to the nucleus. It localises to the cytoplasm. Transcriptional regulator with bimodal DNA-binding specificity. Binds to methylated CpG dinucleotides in the consensus sequence 5'-CGCG-3' and also binds to the non-methylated consensus sequence 5'-CTGCNA-3' also known as the consensus kaiso binding site (KBS). Recruits the N-CoR repressor complex to promote histone deacetylation and the formation of repressive chromatin structures in target gene promoters. May contribute to the repression of target genes of the Wnt signaling pathway. May also activate transcription of a subset of target genes by the recruitment of CTNND2. Represses expression of MMP7 in conjunction with transcriptional corepressors CBFA2T3, CBFA2T2 and RUNX1T1. The sequence is that of Transcriptional regulator Kaiso (ZBTB33) from Homo sapiens (Human).